A 132-amino-acid polypeptide reads, in one-letter code: Small ribosomal subunit protein uS8 (132 aa).

It belongs to the universal ribosomal protein uS8 family. Part of the 30S ribosomal subunit. Contacts proteins S5 and S12.

Its function is as follows. One of the primary rRNA binding proteins, it binds directly to 16S rRNA central domain where it helps coordinate assembly of the platform of the 30S subunit. The protein is Small ribosomal subunit protein uS8 of Streptococcus uberis (strain ATCC BAA-854 / 0140J).